The sequence spans 515 residues: Probable cytosol aminopeptidase (515 aa).

Positions 279 and 284 each coordinate Mn(2+). K291 is a catalytic residue. Mn(2+) contacts are provided by D302, D361, and E363. R365 is an active-site residue.

The protein belongs to the peptidase M17 family. The cofactor is Mn(2+).

Its subcellular location is the cytoplasm. It catalyses the reaction Release of an N-terminal amino acid, Xaa-|-Yaa-, in which Xaa is preferably Leu, but may be other amino acids including Pro although not Arg or Lys, and Yaa may be Pro. Amino acid amides and methyl esters are also readily hydrolyzed, but rates on arylamides are exceedingly low.. It carries out the reaction Release of an N-terminal amino acid, preferentially leucine, but not glutamic or aspartic acids.. Its function is as follows. Presumably involved in the processing and regular turnover of intracellular proteins. Catalyzes the removal of unsubstituted N-terminal amino acids from various peptides. The polypeptide is Probable cytosol aminopeptidase (Mycobacterium bovis (strain ATCC BAA-935 / AF2122/97)).